A 446-amino-acid chain; its full sequence is UDP-N-acetylmuramoylalanine--D-glutamate ligase (446 aa).

116-122 serves as a coordination point for ATP; sequence GSNGKTT.

This sequence belongs to the MurCDEF family.

The protein resides in the cytoplasm. The catalysed reaction is UDP-N-acetyl-alpha-D-muramoyl-L-alanine + D-glutamate + ATP = UDP-N-acetyl-alpha-D-muramoyl-L-alanyl-D-glutamate + ADP + phosphate + H(+). Its pathway is cell wall biogenesis; peptidoglycan biosynthesis. Functionally, cell wall formation. Catalyzes the addition of glutamate to the nucleotide precursor UDP-N-acetylmuramoyl-L-alanine (UMA). The protein is UDP-N-acetylmuramoylalanine--D-glutamate ligase of Marinobacter nauticus (strain ATCC 700491 / DSM 11845 / VT8) (Marinobacter aquaeolei).